A 312-amino-acid polypeptide reads, in one-letter code: tRNA dimethylallyltransferase (312 aa).

Residue 11–18 (GPTAAGKS) participates in ATP binding. 13–18 (TAAGKS) contributes to the substrate binding site. 3 interaction with substrate tRNA regions span residues 36–39 (DSAT), 160–164 (QRIQR), and 243–248 (RCVGYR).

It belongs to the IPP transferase family. Monomer. Requires Mg(2+) as cofactor.

It carries out the reaction adenosine(37) in tRNA + dimethylallyl diphosphate = N(6)-dimethylallyladenosine(37) in tRNA + diphosphate. Its function is as follows. Catalyzes the transfer of a dimethylallyl group onto the adenine at position 37 in tRNAs that read codons beginning with uridine, leading to the formation of N6-(dimethylallyl)adenosine (i(6)A). This chain is tRNA dimethylallyltransferase, found in Bordetella avium (strain 197N).